We begin with the raw amino-acid sequence, 433 residues long: MSKIVKVLGREIIDSRGNPTVEAEVHLEGGFVGMAAAPSGASTGSREALELRDGDKSRFLGKGVLKAVEAVNGPIAKALLGQDAKDQANIDKIMIDLDGTENKSNFGANAILAVSLANAKAAAAAKGMPLYEHISDLNGTHGQYSMPLPMMNIINGGEHADNNVDIQEFMIQPVGAPTLKEAVRMGSEIFHHLAKVLKAKGMNTAVGDEGGYAPNLESNAAALAAIKEAVEAAGYVLGKDVTLAMDCAASEFYNNETGNYELKGEGKTFTSQEFTHYLEELTKQYLIVSIEDGLNESDWDGFAYQTKVLGDKIQLVGDDLFVTNTKILKEGIDKGIANSILIKFNQIGSLTETLAAIKMAKDAGYTAIISHRSGETEDATIADLAVGTAAGQIKTGSMSRSDRVAKYNQLIRIEEALGSKAPFNGLKEVKGQA.

A (2R)-2-phosphoglycerate-binding site is contributed by Gln-167. Glu-209 functions as the Proton donor in the catalytic mechanism. Positions 246, 291, and 318 each coordinate Mg(2+). Lys-326 bears the N6-acetyllysine mark. Residues Lys-343, Arg-372, Ser-373, and Lys-394 each coordinate (2R)-2-phosphoglycerate. Lys-343 serves as the catalytic Proton acceptor. Lys-343 bears the N6-(2-hydroxyisobutyryl)lysine mark.

It belongs to the enolase family. Component of the RNA degradosome, a multiprotein complex involved in RNA processing and mRNA degradation. Mg(2+) is required as a cofactor. In terms of processing, acetylated and 2-hydroxyisobutyrylated at Lys-326 and Lys-343, respectively, reducing the enolase activity. Deacetylated and de-2-hydroxyisobutyrylated by NpdA/CobB, increasing the enolase activity.

It localises to the cytoplasm. It is found in the secreted. The protein localises to the cell surface. It carries out the reaction (2R)-2-phosphoglycerate = phosphoenolpyruvate + H2O. It functions in the pathway carbohydrate degradation; glycolysis; pyruvate from D-glyceraldehyde 3-phosphate: step 4/5. Catalyzes the reversible conversion of 2-phosphoglycerate (2-PG) into phosphoenolpyruvate (PEP). It is essential for the degradation of carbohydrates via glycolysis. The chain is Enolase from Proteus mirabilis (strain HI4320).